A 432-amino-acid chain; its full sequence is Short/branched chain specific acyl-CoA dehydrogenase, mitochondrial (432 aa).

The N-terminal 33 residues, 1-33 (MAVSAFQLWRAGGLLRRNFLTHSSSWKIPPRVL), are a transit peptide targeting the mitochondrion. Residue lysine 70 is modified to N6-acetyllysine; alternate. Lysine 70 carries the post-translational modification N6-succinyllysine; alternate. Residues 174-183 (FCLSEAGAGS) and 207-209 (WIS) contribute to the FAD site. Serine 183 contacts substrate. Serine 183 is subject to Phosphoserine. Residue tyrosine 229 coordinates substrate. N6-succinyllysine is present on lysine 278. Tyrosine 283 contributes to the substrate binding site. Lysine 284 carries the N6-acetyllysine; alternate modification. Residue lysine 284 is modified to N6-succinyllysine; alternate. Position 291–294 (291–294 (NEGR)) interacts with substrate. Residues arginine 319, glutamine 330, and 387 to 391 (EWMGG) contribute to the FAD site. The active-site Proton acceptor is the glutamate 414. 416-418 (TSN) lines the FAD pocket. N6-acetyllysine is present on lysine 426.

This sequence belongs to the acyl-CoA dehydrogenase family. Homotetramer. Requires FAD as cofactor. In terms of tissue distribution, ubiquitously expressed.

Its subcellular location is the mitochondrion matrix. It carries out the reaction 2-methylbutanoyl-CoA + oxidized [electron-transfer flavoprotein] + H(+) = (2E)-2-methylbut-2-enoyl-CoA + reduced [electron-transfer flavoprotein]. It catalyses the reaction (2S)-2-methylbutanoyl-CoA + oxidized [electron-transfer flavoprotein] + H(+) = (2E)-2-methylbut-2-enoyl-CoA + reduced [electron-transfer flavoprotein]. The enzyme catalyses (2R)-2-methylbutanoyl-CoA + oxidized [electron-transfer flavoprotein] + H(+) = ethylacryloyl-CoA + reduced [electron-transfer flavoprotein]. The catalysed reaction is butanoyl-CoA + oxidized [electron-transfer flavoprotein] + H(+) = (2E)-butenoyl-CoA + reduced [electron-transfer flavoprotein]. It carries out the reaction 2-methylpropanoyl-CoA + oxidized [electron-transfer flavoprotein] + H(+) = 2-methylpropenoyl-CoA + reduced [electron-transfer flavoprotein]. It catalyses the reaction hexanoyl-CoA + oxidized [electron-transfer flavoprotein] + H(+) = (2E)-hexenoyl-CoA + reduced [electron-transfer flavoprotein]. The enzyme catalyses valproyl-CoA + oxidized [electron-transfer flavoprotein] + H(+) = (2E)-2-propylpent-2-enoyl-CoA + reduced [electron-transfer flavoprotein]. The protein operates within lipid metabolism; mitochondrial fatty acid beta-oxidation. It functions in the pathway amino-acid degradation; L-isoleucine degradation. With respect to regulation, inhibited by N-ethylmaleimide, hydroxymercuribenzoate, methyl mercury iodide and heavy metals such as Hg2+, Cu2+, and Ag2+. Its function is as follows. Short and branched chain specific acyl-CoA dehydrogenase that catalyzes the removal of one hydrogen from C-2 and C-3 of the fatty acyl-CoA thioester, resulting in the formation of trans-2-enoyl-CoA. Among the different mitochondrial acyl-CoA dehydrogenases, acts specifically on short and branched chain acyl-CoA derivatives such as (S)-2-methylbutyryl-CoA as well as short straight chain acyl-CoAs such as butyryl-CoA. Plays an important role in the metabolism of L-isoleucine by catalyzing the dehydrogenation of 2-methylbutyryl-CoA, one of the steps of the L-isoleucine catabolic pathway. Can also act on valproyl-CoA, a metabolite of the valproic acid drug. The chain is Short/branched chain specific acyl-CoA dehydrogenase, mitochondrial from Rattus norvegicus (Rat).